We begin with the raw amino-acid sequence, 213 residues long: MYQDKILVRQLGLQPYEPISQAMHEFTDTRDESTLDEIWLVEHYPVFTQGQAGKAEHILMPGDIPVIQSDRGGQVTYHGPGQQVMYVLLNLKRRKLGVRELVTLLEQTVVNTLAELGIEAHPRADAPGVYVGEKKICSLGLRIRRGCSFHGLALNVNMDLSPFLRINPCGYAGMEMAKISQWKPEATTNNIAPRLLENILALLNNPDFEYITA.

In terms of domain architecture, BPL/LPL catalytic spans 32–207 (ESTLDEIWLV…NILALLNNPD (176 aa)). Substrate contacts are provided by residues 71-78 (RGGQVTYH), 138-140 (SLG), and 151-153 (GLA). Residue cysteine 169 is the Acyl-thioester intermediate of the active site.

Belongs to the LipB family.

It localises to the cytoplasm. The enzyme catalyses octanoyl-[ACP] + L-lysyl-[protein] = N(6)-octanoyl-L-lysyl-[protein] + holo-[ACP] + H(+). Its pathway is protein modification; protein lipoylation via endogenous pathway; protein N(6)-(lipoyl)lysine from octanoyl-[acyl-carrier-protein]: step 1/2. Catalyzes the transfer of endogenously produced octanoic acid from octanoyl-acyl-carrier-protein onto the lipoyl domains of lipoate-dependent enzymes. Lipoyl-ACP can also act as a substrate although octanoyl-ACP is likely to be the physiological substrate. The protein is Octanoyltransferase of Escherichia coli O17:K52:H18 (strain UMN026 / ExPEC).